The sequence spans 197 residues: Guanylate kinase (197 aa).

One can recognise a Guanylate kinase-like domain in the interval 9–188; sequence GRLVVFSAPS…AVEAVILAIS (180 aa). 16 to 23 is a binding site for ATP; that stretch reads APSGTGKS.

This sequence belongs to the guanylate kinase family.

It is found in the cytoplasm. It carries out the reaction GMP + ATP = GDP + ADP. Essential for recycling GMP and indirectly, cGMP. In Chlorobium luteolum (strain DSM 273 / BCRC 81028 / 2530) (Pelodictyon luteolum), this protein is Guanylate kinase.